The chain runs to 699 residues: tRNA 5-methylaminomethyl-2-thiouridine biosynthesis bifunctional protein MnmC (699 aa).

A tRNA (mnm(5)s(2)U34)-methyltransferase region spans residues 1 to 247 (MPAVSRPLPP…KREMLCGEIA (247 aa)). Residues 275–699 (IGAGLAGTSV…QPSPTTTETP (425 aa)) form an FAD-dependent cmnm(5)s(2)U34 oxidoreductase region. The interval 675–699 (RGNATLSTSSPNDDAQPSPTTTETP) is disordered.

This sequence in the N-terminal section; belongs to the methyltransferase superfamily. tRNA (mnm(5)s(2)U34)-methyltransferase family. It in the C-terminal section; belongs to the DAO family. FAD serves as cofactor.

Its subcellular location is the cytoplasm. The enzyme catalyses 5-aminomethyl-2-thiouridine(34) in tRNA + S-adenosyl-L-methionine = 5-methylaminomethyl-2-thiouridine(34) in tRNA + S-adenosyl-L-homocysteine + H(+). Functionally, catalyzes the last two steps in the biosynthesis of 5-methylaminomethyl-2-thiouridine (mnm(5)s(2)U) at the wobble position (U34) in tRNA. Catalyzes the FAD-dependent demodification of cmnm(5)s(2)U34 to nm(5)s(2)U34, followed by the transfer of a methyl group from S-adenosyl-L-methionine to nm(5)s(2)U34, to form mnm(5)s(2)U34. In Chromohalobacter salexigens (strain ATCC BAA-138 / DSM 3043 / CIP 106854 / NCIMB 13768 / 1H11), this protein is tRNA 5-methylaminomethyl-2-thiouridine biosynthesis bifunctional protein MnmC.